We begin with the raw amino-acid sequence, 542 residues long: LysM domain-containing protein ARB_00327 (542 aa).

An N-terminal signal peptide occupies residues 1–35 (MLSSVLFPAMRTLLLLKYVFSLISLSAICCQTVSA). N-linked (GlcNAc...) asparagine glycosylation is found at asparagine 218, asparagine 298, asparagine 381, and asparagine 415. The region spanning 264-310 (RWYGVKKGDYCNLIVLKFGITMDNFIFLNPALNSNCTNLYAEESYCV) is the LysM 1 domain. A disordered region spans residues 439-484 (DSDEPTPTTPITTSDDPTSTSATPTTPTTSSKPSPGAPTMTGQPSA). A compositionally biased stretch (low complexity) spans 443 to 472 (PTPTTPITTSDDPTSTSATPTTPTTSSKPS). The region spanning 487–534 (KWHTVTNGESCTVIPKTFGITLEQFLAWNPTVKSDCTENFWAGYAYCV) is the LysM 2 domain.

The protein localises to the secreted. Might have a role in sequestration of chitin oligosaccharides (breakdown products of fungal cell walls that are released during invasion and act as triggers of host immunity) to dampen host defense. The polypeptide is LysM domain-containing protein ARB_00327 (Arthroderma benhamiae (strain ATCC MYA-4681 / CBS 112371) (Trichophyton mentagrophytes)).